A 78-amino-acid polypeptide reads, in one-letter code: Putative protein PeaD (78 aa).

This sequence belongs to the phage P protein family.

This is Putative protein PeaD (peaD) from Escherichia coli (strain K12).